Consider the following 560-residue polypeptide: MSETINTAAQFPSFEKPTVQFNEKGWGPCELPDTFKDVPYQPFSKNDRLGKICDWTNTSNNDKKYQNKYASSFGTGNQYSYYHEEDETTFHLVDTARVQKPPHQRGRFRNMRNSRSGRGRNARGGLNTHGMTTLSGKNVKARDPRHGRGMGKKFGHRGPPPKMRESSVAVRADWASIEEMDFPRLIKLSLPNIKEGVDIVTCGTLEYYDKTYDRINVKNEKPLQKIDRIVHTVTTTDDPVIRRLSKTVGNVFATDAILATIMCSTRSNYSWDIVIEKVGDKVFMDKRDHTEFDLLTVNESSVEPPTDDDSSCNSPRNLAIEATFINHNFSQQVLKTGDQEPKYKFEESNPFISEDEDIQVASVGYRYKKWELGSDIVLVARCEHDGVLQTPSGEPQFMTIKALNEWDSKLANGVEWRQKLDTQRGAVLANELRNNACKLAKWTVQAVLAGSDQLKLGYVSRINPRDHSRHVILGTQQFKPHEFATQINLSMDNAWGILRCIIDLVMKQKDGKYLIMKDPNKPIIRLYDIPDNTFDSDDSDDGEGDDEGFQQVYNYAHNKI.

Residues 98–166 (VQKPPHQRGR…RGPPPKMRES (69 aa)) form a disordered region. Positions 100–121 (KPPHQRGRFRNMRNSRSGRGRN) are enriched in basic residues. Thr-128 carries the phosphothreonine modification. The segment covering 147 to 156 (GRGMGKKFGH) has biased composition (basic residues). Positions 291–305 (EFDLLTVNESSVEPP) are RNA gate.

Belongs to the eIF-3 subunit D family. Component of the eukaryotic translation initiation factor 3 (eIF-3) complex. The eIF-3 complex interacts with pix.

The protein resides in the cytoplasm. In terms of biological role, mRNA cap-binding component of the eukaryotic translation initiation factor 3 (eIF-3) complex, which is involved in protein synthesis of a specialized repertoire of mRNAs and, together with other initiation factors, stimulates binding of mRNA and methionyl-tRNAi to the 40S ribosome. The eIF-3 complex specifically targets and initiates translation of a subset of mRNAs involved in cell proliferation. In the eIF-3 complex, eif3d specifically recognizes and binds the 7-methylguanosine cap of a subset of mRNAs. This Drosophila sechellia (Fruit fly) protein is Eukaryotic translation initiation factor 3 subunit D-1.